A 631-amino-acid chain; its full sequence is 1-deoxy-D-xylulose-5-phosphate synthase (631 aa).

Residues H74 and G115–S117 contribute to the thiamine diphosphate site. D146 provides a ligand contact to Mg(2+). Thiamine diphosphate is bound by residues G147 to A148, N175, Y286, and E368. Residue N175 coordinates Mg(2+).

This sequence belongs to the transketolase family. DXPS subfamily. In terms of assembly, homodimer. Requires Mg(2+) as cofactor. Thiamine diphosphate serves as cofactor.

It catalyses the reaction D-glyceraldehyde 3-phosphate + pyruvate + H(+) = 1-deoxy-D-xylulose 5-phosphate + CO2. The protein operates within metabolic intermediate biosynthesis; 1-deoxy-D-xylulose 5-phosphate biosynthesis; 1-deoxy-D-xylulose 5-phosphate from D-glyceraldehyde 3-phosphate and pyruvate: step 1/1. Its function is as follows. Catalyzes the acyloin condensation reaction between C atoms 2 and 3 of pyruvate and glyceraldehyde 3-phosphate to yield 1-deoxy-D-xylulose-5-phosphate (DXP). In Natranaerobius thermophilus (strain ATCC BAA-1301 / DSM 18059 / JW/NM-WN-LF), this protein is 1-deoxy-D-xylulose-5-phosphate synthase.